Here is a 286-residue protein sequence, read N- to C-terminus: MLSPFLAYLLSVVLLCRIARSQYSSDQCSWRGSGLTHEGHTRGVEQVYLRCAQGFLEWLYPTGAIIVNLRPNTLSPAASLLSVCIKPSKESSGTHIYLDRLGKLRLLLSEGDQAEGKVHCFNIQDGALFIEAVPQRDISRKITAFQYELVNHRPGADPQSLSAPCQPCTDAEVLLAVCTSDFVARGRILGVSEEDEQTSVTVSLSHLYRQKTQVFVSGGGRAKRWTGFVKMSRQCGVKPGDGEFLFTGTVRFGEAWLSCAPRYKDFLRVYQDARQQGTNPCHLETD.

The N-terminal stretch at 1–21 (MLSPFLAYLLSVVLLCRIARS) is a signal peptide. Cystine bridges form between Cys-28/Cys-51, Cys-84/Cys-120, Cys-165/Cys-235, Cys-168/Cys-259, and Cys-178/Cys-281.

It belongs to the meteorin family.

Its subcellular location is the secreted. In terms of biological role, hormone induced following exercise or cold exposure that promotes energy expenditure. Induced either in the skeletal muscle after exercise or in adipose tissue following cold exposure and is present in the circulation. Able to stimulate energy expenditure associated with the browning of the white fat depots and improves glucose tolerance. In Danio rerio (Zebrafish), this protein is Meteorin-like protein (metrnl).